Consider the following 437-residue polypeptide: tRNA-2-methylthio-N(6)-dimethylallyladenosine synthase (437 aa).

In terms of domain architecture, MTTase N-terminal spans 3–120; the sequence is RKLFIETHGC…LPEMIDAART (118 aa). 6 residues coordinate [4Fe-4S] cluster: Cys-12, Cys-49, Cys-83, Cys-157, Cys-161, and Cys-164. The Radical SAM core domain occupies 143-370; the sequence is RVDGPSAYVS…QQRINQQGFE (228 aa). The TRAM domain occupies 373 to 437; that stretch reads RRMVGTTQRI…PHSLRGSLLS (65 aa).

The protein belongs to the methylthiotransferase family. MiaB subfamily. Monomer. [4Fe-4S] cluster is required as a cofactor.

It is found in the cytoplasm. It carries out the reaction N(6)-dimethylallyladenosine(37) in tRNA + (sulfur carrier)-SH + AH2 + 2 S-adenosyl-L-methionine = 2-methylsulfanyl-N(6)-dimethylallyladenosine(37) in tRNA + (sulfur carrier)-H + 5'-deoxyadenosine + L-methionine + A + S-adenosyl-L-homocysteine + 2 H(+). Catalyzes the methylthiolation of N6-(dimethylallyl)adenosine (i(6)A), leading to the formation of 2-methylthio-N6-(dimethylallyl)adenosine (ms(2)i(6)A) at position 37 in tRNAs that read codons beginning with uridine. The polypeptide is tRNA-2-methylthio-N(6)-dimethylallyladenosine synthase (Stutzerimonas stutzeri (strain A1501) (Pseudomonas stutzeri)).